A 362-amino-acid chain; its full sequence is Methylthioribose-1-phosphate isomerase (362 aa).

Catalysis depends on Asp-252, which acts as the Proton donor.

The protein belongs to the eIF-2B alpha/beta/delta subunits family. MtnA subfamily.

Its subcellular location is the cytoplasm. The protein resides in the nucleus. It carries out the reaction 5-(methylsulfanyl)-alpha-D-ribose 1-phosphate = 5-(methylsulfanyl)-D-ribulose 1-phosphate. The protein operates within amino-acid biosynthesis; L-methionine biosynthesis via salvage pathway; L-methionine from S-methyl-5-thio-alpha-D-ribose 1-phosphate: step 1/6. Functionally, catalyzes the interconversion of methylthioribose-1-phosphate (MTR-1-P) into methylthioribulose-1-phosphate (MTRu-1-P). The protein is Methylthioribose-1-phosphate isomerase of Drosophila virilis (Fruit fly).